The sequence spans 329 residues: Coiled-coil domain-containing protein 54 (329 aa).

Residues 86–149 (NIVSSISNIQ…VTELESQNSY (64 aa)) are a coiled coil. The span at 178–191 (TPKGTATSPDTVIS) shows a compositional bias: polar residues. A disordered region spans residues 178-214 (TPKGTATSPDTVISSAEPERVSSYPEPTGELKKKTTS). Thr182 is modified (phosphothreonine).

The protein is Coiled-coil domain-containing protein 54 (Ccdc54) of Mus musculus (Mouse).